A 274-amino-acid chain; its full sequence is Phosphatidylglycerol--prolipoprotein diacylglyceryl transferase (274 aa).

7 helical membrane passes run 22–42, 61–81, 96–116, 125–145, 177–197, 204–224, and 238–258; these read LSVRWYGLMYLFGFAFAMWLA, LLFYGFLGVILGGRVGYVLFY, IWTGGMSFHGGLIGVITAMVW, FFTVADFVAPLIPFGLGVGRI, SQLYQFALEGVVLFIILNLFW, GAISGMFLLFYGLFRFLVEFV, and ISMGQILSTPMIIIGALMIWV. An a 1,2-diacyl-sn-glycero-3-phospho-(1'-sn-glycerol)-binding site is contributed by Arg-144.

This sequence belongs to the Lgt family.

Its subcellular location is the cell inner membrane. It catalyses the reaction L-cysteinyl-[prolipoprotein] + a 1,2-diacyl-sn-glycero-3-phospho-(1'-sn-glycerol) = an S-1,2-diacyl-sn-glyceryl-L-cysteinyl-[prolipoprotein] + sn-glycerol 1-phosphate + H(+). The protein operates within protein modification; lipoprotein biosynthesis (diacylglyceryl transfer). Functionally, catalyzes the transfer of the diacylglyceryl group from phosphatidylglycerol to the sulfhydryl group of the N-terminal cysteine of a prolipoprotein, the first step in the formation of mature lipoproteins. The polypeptide is Phosphatidylglycerol--prolipoprotein diacylglyceryl transferase (Aeromonas hydrophila subsp. hydrophila (strain ATCC 7966 / DSM 30187 / BCRC 13018 / CCUG 14551 / JCM 1027 / KCTC 2358 / NCIMB 9240 / NCTC 8049)).